Reading from the N-terminus, the 101-residue chain is Small ribosomal subunit protein uS14 (101 aa).

It belongs to the universal ribosomal protein uS14 family. Part of the 30S ribosomal subunit. Contacts proteins S3 and S10.

Functionally, binds 16S rRNA, required for the assembly of 30S particles and may also be responsible for determining the conformation of the 16S rRNA at the A site. The sequence is that of Small ribosomal subunit protein uS14 from Colwellia psychrerythraea (strain 34H / ATCC BAA-681) (Vibrio psychroerythus).